The sequence spans 79 residues: Centromere protein X (79 aa).

Met-1 is modified (N-acetylmethionine).

Belongs to the CENP-X/MHF2 family. Heterodimer with CENPX, sometimes called MHF; this interaction stabilizes both partners. MHF heterodimers can assemble to form tetrameric structures. MHF also coassemble with CENPT-CENPW heterodimers at centromeres to form the tetrameric CENP-T-W-S-X complex. Forms a discrete complex with FANCM and CENPX, called FANCM-MHF; this interaction, probably mediated by direct binding between CENPS and FANCM, leads to synergistic activation of double-stranded DNA binding and strongly stimulates FANCM-mediated DNA remodeling. Recruited by FANCM to the Fanconi anemia (FA) core complex, which consists of CENPS, CENPX, FANCA, FANCB, FANCC, FANCE, FANCF, FANCG, FANCL, FANCM, FAAP24 and FAAP100. The FA core complex associates with Bloom syndrome (BLM) complex, which consists of at least BLM, DNA topoisomerase 3-alpha (TOP3A), RMI1/BLAP75, RPA1/RPA70 and RPA2/RPA32. The super complex between FA and BLM is called BRAFT.

The protein resides in the nucleus. It localises to the chromosome. It is found in the centromere. The protein localises to the kinetochore. Functionally, DNA-binding component of the Fanconi anemia (FA) core complex. Required for the normal activation of the FA pathway, leading to monoubiquitination of the FANCI-FANCD2 complex in response to DNA damage, cellular resistance to DNA cross-linking drugs, and prevention of chromosomal breakage. In complex with CENPS (MHF heterodimer), crucial cofactor for FANCM in both binding and ATP-dependent remodeling of DNA. Stabilizes FANCM. In complex with CENPS and FANCM (but not other FANC proteins), rapidly recruited to blocked forks and promotes gene conversion at blocked replication forks. In complex with CENPS, CENPT and CENPW (CENP-T-W-S-X heterotetramer), involved in the formation of a functional kinetochore outer plate, which is essential for kinetochore-microtubule attachment and faithful mitotic progression. As a component of MHF and CENP-T-W-S-X complexes, binds DNA and bends it to form a nucleosome-like structure. DNA-binding function is fulfilled in the presence of CENPS, with the following preference for DNA substates: Holliday junction &gt; double-stranded &gt; splay arm &gt; single-stranded. Does not bind DNA on its own. This chain is Centromere protein X (CENPX), found in Bos taurus (Bovine).